The chain runs to 107 residues: Universal stress protein B homolog (107 aa).

2 helical membrane-spanning segments follow: residues 6-23 (TILF…ARYF) and 89-106 (LFIL…SSFI).

Belongs to the universal stress protein B family.

It localises to the cell inner membrane. In Vibrio atlanticus (strain LGP32) (Vibrio splendidus (strain Mel32)), this protein is Universal stress protein B homolog.